The sequence spans 96 residues: Large ribosomal subunit protein uL23 (96 aa).

Belongs to the universal ribosomal protein uL23 family. As to quaternary structure, part of the 50S ribosomal subunit. Contacts protein L29, and trigger factor when it is bound to the ribosome.

Its function is as follows. One of the early assembly proteins it binds 23S rRNA. One of the proteins that surrounds the polypeptide exit tunnel on the outside of the ribosome. Forms the main docking site for trigger factor binding to the ribosome. In Onion yellows phytoplasma (strain OY-M), this protein is Large ribosomal subunit protein uL23.